Here is a 215-residue protein sequence, read N- to C-terminus: FMN-dependent NADH:quinone oxidoreductase (215 aa).

Position 17–19 (17–19 (SAS)) interacts with FMN.

It belongs to the azoreductase type 1 family. Homodimer. FMN is required as a cofactor.

The catalysed reaction is 2 a quinone + NADH + H(+) = 2 a 1,4-benzosemiquinone + NAD(+). It carries out the reaction N,N-dimethyl-1,4-phenylenediamine + anthranilate + 2 NAD(+) = 2-(4-dimethylaminophenyl)diazenylbenzoate + 2 NADH + 2 H(+). Functionally, quinone reductase that provides resistance to thiol-specific stress caused by electrophilic quinones. Its function is as follows. Also exhibits azoreductase activity. Catalyzes the reductive cleavage of the azo bond in aromatic azo compounds to the corresponding amines. This chain is FMN-dependent NADH:quinone oxidoreductase, found in Clostridium botulinum (strain Alaska E43 / Type E3).